The following is a 258-amino-acid chain: Translocon-associated protein subunit alpha (258 aa).

The signal sequence occupies residues 1–24 (MMNLRVLFLALLLLASPLLQVARC). The Lumenal segment spans residues 25 to 190 (QSDAEDHSSL…ESGGLLSGES (166 aa)). N-linked (GlcNAc...) asparagine glycans are attached at residues asparagine 57, asparagine 119, and asparagine 127. Residues 191 to 209 (VFLLTLGIGLLLLLGLWAY) traverse the membrane as a helical segment. The Cytoplasmic segment spans residues 210-258 (SQVQRLTKKTKKVSKVEVGTRSTEASLDEWLEGTTLAKTSSGKTKNKKN).

It belongs to the TRAP-alpha family. In terms of assembly, heterotetramer of TRAP-alpha, TRAP-beta, TRAP-delta and TRAP-gamma. In terms of processing, phosphorylated in its cytoplasmic tail.

The protein localises to the endoplasmic reticulum membrane. In terms of biological role, TRAP proteins are part of a complex whose function is to bind calcium to the ER membrane and thereby regulate the retention of ER resident proteins. May be involved in the recycling of the translocation apparatus after completion of the translocation process or may function as a membrane-bound chaperone facilitating folding of translocated proteins. The protein is Translocon-associated protein subunit alpha of Arabidopsis thaliana (Mouse-ear cress).